A 259-amino-acid chain; its full sequence is Type III pantothenate kinase (259 aa).

ATP is bound at residue 6–13 (DVGNTNIV). Substrate-binding positions include Tyr-100 and 107 to 110 (GADR). Asp-109 functions as the Proton acceptor in the catalytic mechanism. Asp-129 contacts K(+). Thr-132 lines the ATP pocket. A substrate-binding site is contributed by Thr-184.

This sequence belongs to the type III pantothenate kinase family. In terms of assembly, homodimer. It depends on NH4(+) as a cofactor. Requires K(+) as cofactor.

It localises to the cytoplasm. It catalyses the reaction (R)-pantothenate + ATP = (R)-4'-phosphopantothenate + ADP + H(+). It functions in the pathway cofactor biosynthesis; coenzyme A biosynthesis; CoA from (R)-pantothenate: step 1/5. Catalyzes the phosphorylation of pantothenate (Pan), the first step in CoA biosynthesis. The polypeptide is Type III pantothenate kinase (Clostridium kluyveri (strain NBRC 12016)).